A 724-amino-acid chain; its full sequence is Long-chain-fatty-acid--CoA ligase ACSBG1 (724 aa).

The disordered stretch occupies residues 1–30 (MPRNSGAGYGCPHGDPSMLDSRETPQESRQ). Residues 20–30 (DSRETPQESRQ) show a composition bias toward basic and acidic residues. Phosphoserine is present on residues Ser53 and Ser56. ATP is bound by residues 282 to 290 (TSGTTGNPK), 472 to 477 (AGYGLS), Asp550, and Arg565. Tyr658 bears the Phosphotyrosine mark. An ATP-binding site is contributed by Lys701.

The protein belongs to the ATP-dependent AMP-binding enzyme family. Bubblegum subfamily. As to expression, expressed primarily in brain. Expressed at lower level in testis and adrenal gland. Present in all regions of brain except pituitary.

Its subcellular location is the cytoplasm. The protein resides in the cytoplasmic vesicle. The protein localises to the microsome. It is found in the endoplasmic reticulum. It localises to the cell membrane. The enzyme catalyses a long-chain fatty acid + ATP + CoA = a long-chain fatty acyl-CoA + AMP + diphosphate. It carries out the reaction (E)-hexadec-2-enoate + ATP + CoA = (2E)-hexadecenoyl-CoA + AMP + diphosphate. The catalysed reaction is hexadecanoate + ATP + CoA = hexadecanoyl-CoA + AMP + diphosphate. Catalyzes the conversion of fatty acids such as long-chain and very long-chain fatty acids to their active form acyl-CoAs for both synthesis of cellular lipids, and degradation via beta-oxidation. Can activate diverse saturated, monosaturated and polyunsaturated fatty acids. The protein is Long-chain-fatty-acid--CoA ligase ACSBG1 of Homo sapiens (Human).